Reading from the N-terminus, the 278-residue chain is 4-deoxy-L-threo-5-hexosulose-uronate ketol-isomerase (278 aa).

Zn(2+)-binding residues include histidine 196, histidine 198, glutamate 203, and histidine 245.

This sequence belongs to the KduI family. Zn(2+) is required as a cofactor.

It catalyses the reaction 5-dehydro-4-deoxy-D-glucuronate = 3-deoxy-D-glycero-2,5-hexodiulosonate. It participates in glycan metabolism; pectin degradation; 2-dehydro-3-deoxy-D-gluconate from pectin: step 4/5. Its function is as follows. Catalyzes the isomerization of 5-dehydro-4-deoxy-D-glucuronate to 3-deoxy-D-glycero-2,5-hexodiulosonate. The chain is 4-deoxy-L-threo-5-hexosulose-uronate ketol-isomerase from Shigella flexneri serotype 5b (strain 8401).